The chain runs to 295 residues: Protease HtpX homolog (295 aa).

The next 2 helical transmembrane spans lie at 6–26 (IGLF…VTSV) and 40–60 (LSSL…VSLL). Residue H148 participates in Zn(2+) binding. E149 is an active-site residue. Residue H152 coordinates Zn(2+). 2 consecutive transmembrane segments (helical) span residues 163 to 183 (LIQG…SYAL) and 198 to 218 (ISNI…VAYF). Residue E223 coordinates Zn(2+).

This sequence belongs to the peptidase M48B family. It depends on Zn(2+) as a cofactor.

It localises to the cell inner membrane. This is Protease HtpX homolog from Leptospira borgpetersenii serovar Hardjo-bovis (strain JB197).